The chain runs to 433 residues: Signal recognition particle 54 kDa protein (433 aa).

Residues 106–113 (GVEGSGKT), 186–190 (DTAGR), and 244–247 (TKMD) each bind GTP.

It belongs to the GTP-binding SRP family. SRP54 subfamily. As to quaternary structure, part of the signal recognition particle protein translocation system, which is composed of SRP and FtsY. Archaeal SRP consists of a 7S RNA molecule of 300 nucleotides and two protein subunits: SRP54 and SRP19.

Its subcellular location is the cytoplasm. The enzyme catalyses GTP + H2O = GDP + phosphate + H(+). Functionally, involved in targeting and insertion of nascent membrane proteins into the cytoplasmic membrane. Binds to the hydrophobic signal sequence of the ribosome-nascent chain (RNC) as it emerges from the ribosomes. The SRP-RNC complex is then targeted to the cytoplasmic membrane where it interacts with the SRP receptor FtsY. The protein is Signal recognition particle 54 kDa protein of Pyrobaculum arsenaticum (strain DSM 13514 / JCM 11321 / PZ6).